The chain runs to 604 residues: MENSVTQDGIATVLANQSLDSSSVRPEIVVQVVDLKPAGNRYTFSANDGKMKIKAMLPATLTSDIISGKIQNLGLIRLLEYTVNDIPGKSEEKYMLITKCEAVASALDSEIKAEIKASTGIMLKPKHEFVAKSASQIINEQRGNAAPAARMAMTRRVHPLVSLNPYQGSWTIKVRVTNKGVMRTYKNARGEGCVFNVELTDEEGTQIQATMFNAAARKFYDRFEMGKVYYISRGSLKLANKQFKTVQNDYEMTLNENSEVEEASNEEMFTPETKFNFVPIDELGTYVNQKDLIDVIGVVQSVSPTMSIRRKNDNEMIPKRDITLADETKKTVVVSLWNDLATGIGQELLDMADNHPVIAIKSLKVGAFQGVSLSTISRSNVVINPNSPEATKLKSWYDAEGKETSMSAIGSGMSSSANNGSRSMYSDRVFLSHITSNPSLGEEKPVFFSTRAYISFIKPDQTMWYRACKTCNKKVTEAMDSGYWCESCQKKDQECSLRYIMAVKVSDSTGETWLSAFNDEAEKIIGCTADDLNDLKSEEGEVNEFQTKLKEATWSSHLFRISVSQQEYNSEKRQRITVRGVSPIDFAAETRLLLQDISKNKTSQ.

The OB DNA-binding region spans 170–256; the sequence is WTIKVRVTNK…QNDYEMTLNE (87 aa). Residues 468-488 form a C4-type zinc finger; it reads CKTCNKKVTEAMDSGYWCESC.

This sequence belongs to the replication factor A protein 1 family. As to quaternary structure, heterotrimer of RPA1, RPA2 and RPA3 (canonical replication protein A complex).

The protein localises to the nucleus. Component of the replication protein A complex (RPA) required for DNA recombination, repair and replication. The activity of RPA is mediated by single-stranded DNA binding and protein interactions. Probably involved in repair of double-strand DNA breaks (DSBs) induced by genotoxic stresses. The sequence is that of Replication protein A 70 kDa DNA-binding subunit B (RPA1B) from Arabidopsis thaliana (Mouse-ear cress).